The chain runs to 82 residues: ATP synthase subunit c, chloroplastic (82 aa).

The next 2 helical transmembrane spans lie at 3-23 and 57-77; these read PLIA…AAIG and FAFM…LLFA.

This sequence belongs to the ATPase C chain family. As to quaternary structure, F-type ATPases have 2 components, F(1) - the catalytic core - and F(0) - the membrane proton channel. F(1) has five subunits: alpha(3), beta(3), gamma(1), delta(1), epsilon(1). F(0) has four main subunits: a(1), b(1), b'(1) and c(10-14). The alpha and beta chains form an alternating ring which encloses part of the gamma chain. F(1) is attached to F(0) by a central stalk formed by the gamma and epsilon chains, while a peripheral stalk is formed by the delta, b and b' chains.

Its subcellular location is the plastid. It localises to the chloroplast thylakoid membrane. In terms of biological role, f(1)F(0) ATP synthase produces ATP from ADP in the presence of a proton or sodium gradient. F-type ATPases consist of two structural domains, F(1) containing the extramembraneous catalytic core and F(0) containing the membrane proton channel, linked together by a central stalk and a peripheral stalk. During catalysis, ATP synthesis in the catalytic domain of F(1) is coupled via a rotary mechanism of the central stalk subunits to proton translocation. Its function is as follows. Key component of the F(0) channel; it plays a direct role in translocation across the membrane. A homomeric c-ring of between 10-14 subunits forms the central stalk rotor element with the F(1) delta and epsilon subunits. This Oltmannsiellopsis viridis (Marine flagellate) protein is ATP synthase subunit c, chloroplastic.